We begin with the raw amino-acid sequence, 474 residues long: Glycogen synthase (474 aa).

Position 12 (lysine 12) interacts with ADP-alpha-D-glucose.

It belongs to the glycosyltransferase 1 family. Bacterial/plant glycogen synthase subfamily.

The enzyme catalyses [(1-&gt;4)-alpha-D-glucosyl](n) + ADP-alpha-D-glucose = [(1-&gt;4)-alpha-D-glucosyl](n+1) + ADP + H(+). It participates in glycan biosynthesis; glycogen biosynthesis. In terms of biological role, synthesizes alpha-1,4-glucan chains using ADP-glucose. This chain is Glycogen synthase, found in Xanthomonas axonopodis pv. citri (strain 306).